Consider the following 563-residue polypeptide: Cytochrome P450 monooxygenase phqL (563 aa).

The next 3 helical transmembrane spans lie at Glu-20 to Phe-40, Ile-52 to Gly-72, and Ala-80 to Leu-100. A glycan (N-linked (GlcNAc...) asparagine) is linked at Asn-279. A helical transmembrane segment spans residues Leu-362–Leu-382. The N-linked (GlcNAc...) asparagine glycan is linked to Asn-419. Cys-502 serves as a coordination point for heme.

Belongs to the cytochrome P450 family. The cofactor is heme.

It is found in the membrane. It functions in the pathway alkaloid biosynthesis. Functionally, cytochrome P450 monooxygenase; part of the gene cluster that mediates the biosynthesis of paraherquamide, a fungal indole alkaloid that belongs to a family of natural products containing a characteristic bicyclo[2.2.2]diazaoctane core. The first steps in the biosynthesis of paraherquamide is the production of the beta-methyl-proline precursor from L-isoleucine. They require oxidation of a terminally hydroxylated L-isoleucine to the corresponding aldehyde by enzymes which have still to be identified. Spontaneous cyclization and dehydration would yield the 4-methyl pyrolline-5-carboxylic acid, which is then reduced by the pyrroline-5-carboxylate reductase phqD leading to the beta-methyl-proline precursor. The next step of paraherquamide biosynthesis involves coupling of beta-methyl-proline and L-tryptophan by the bimodular NRPS phqB, to produce a monooxopiperazine intermediate. The reductase (R) domain of phqB utilizes NADPH for hydride transfer to reduce the thioester bond of the T domain-tethered linear dipeptide to a hemithioaminal intermediate, which spontaneously cleaves the C-S bond to release the aldehyde product. This compound undergoes spontaneous cyclization and dehydration to give a dienamine which is reverse prenylated at C-2 by the reverse prenyltransferase phqJ. The other prenyltransferase present in the cluster, phqI may be a redundant gene in the pathway. During biosynthetic assembly, the key step to produce the polycyclic core is catalyzed by the bifunctional reductase and intramolecular [4+2] Diels-Alderase, phqE, resulting in formation of the [2.2.2] diazaoctane intermediate preparaherquamide. Following formation of preparaherquamide, an indole 2,3-epoxidation-initiated pinacol-like rearrangement is catalyzed by the phqK FAD-dependent monooxygenase. The prenyltransferase phqA, the cytochrome P450 monooxygenase phqL, and the FAD-linked oxidoreductase phqH (or the cytochrome P450 monooxygenase phqM), are proposed to be involved in the formation of the pyran ring. The FAD-dependent monooxygenase phqK is likely responsible for generation of the spiro-oxindole, and the N-methylation is likely mediated by the phqN methyltransferase leading to the isolable natural product paraherquamide F. However, the order of these biosynthetic steps has still to be determined. In late-stage paraherquamide biosynthesis, the third P450 monooxygenase, phqO, is probably responsible for the C-14 hydroxylation, transforming paraherquamide F to paraherquamide G, and paraherquamide E to the final product paraherquamide A. The expansion from the 6-membered ring pyran (in paraherquamides F and G) to the 7-membered dioxepin ring (in paraherquamides A and E) represents a poorly understood but intriguing process that probably involves the 2-oxoglutarate-dependent dioxygenase phqC. Finally, the remaining members of the paraherquamide cluster, including phqI as well as phqM (or phqH), do not have a clearly prescribed role and appear to be redundant. The chain is Cytochrome P450 monooxygenase phqL from Penicillium fellutanum.